The chain runs to 156 residues: Small ribosomal subunit protein uS7 (156 aa).

Belongs to the universal ribosomal protein uS7 family. In terms of assembly, part of the 30S ribosomal subunit. Contacts proteins S9 and S11.

One of the primary rRNA binding proteins, it binds directly to 16S rRNA where it nucleates assembly of the head domain of the 30S subunit. Is located at the subunit interface close to the decoding center, probably blocks exit of the E-site tRNA. This Mycoplasma mobile (strain ATCC 43663 / 163K / NCTC 11711) (Mesomycoplasma mobile) protein is Small ribosomal subunit protein uS7.